We begin with the raw amino-acid sequence, 437 residues long: GTPase Der (437 aa).

2 EngA-type G domains span residues 4-167 (PVVA…PDEA) and 176-352 (IRFS…DNHR). Residues 10–17 (GRPNVGKS), 57–61 (DTGGI), 119–122 (NKVD), 182–189 (GRPNVGKS), 230–234 (DTAGM), and 295–298 (NKWD) each bind GTP. The 85-residue stretch at 353-437 (KRISSSTLND…PIKLIVRARK (85 aa)) folds into the KH-like domain.

It belongs to the TRAFAC class TrmE-Era-EngA-EngB-Septin-like GTPase superfamily. EngA (Der) GTPase family. As to quaternary structure, associates with the 50S ribosomal subunit.

Its function is as follows. GTPase that plays an essential role in the late steps of ribosome biogenesis. In Leuconostoc citreum (strain KM20), this protein is GTPase Der.